Reading from the N-terminus, the 267-residue chain is Glutamate 5-kinase (267 aa).

Residue Lys-14 participates in ATP binding. Substrate is bound by residues Ser-54, Asp-141, and Asn-157. ATP is bound by residues 177-178 (SD) and 219-225 (TGGMMSK).

This sequence belongs to the glutamate 5-kinase family.

It is found in the cytoplasm. It carries out the reaction L-glutamate + ATP = L-glutamyl 5-phosphate + ADP. Its pathway is amino-acid biosynthesis; L-proline biosynthesis; L-glutamate 5-semialdehyde from L-glutamate: step 1/2. Functionally, catalyzes the transfer of a phosphate group to glutamate to form L-glutamate 5-phosphate. The protein is Glutamate 5-kinase of Streptococcus thermophilus.